A 101-amino-acid polypeptide reads, in one-letter code: uncharacterized protein (101 aa).

This is an uncharacterized protein from Gracula (BFDV).